A 357-amino-acid chain; its full sequence is Arginine kinase (357 aa).

The Phosphagen kinase N-terminal domain maps to 9 to 91 (KLEAGFKKLQ…FNPIIEDYHE (83 aa)). 64 to 66 (GVG) contributes to the L-arginine binding site. In terms of domain architecture, Phosphagen kinase C-terminal spans 119 to 356 (YVVSTHVRCG…LEMIKMEEAA (238 aa)). ATP contacts are provided by residues 122-126 (STHVR) and His185. Glu225 is an L-arginine binding site. Residue Arg229 participates in ATP binding. Cys271 provides a ligand contact to L-arginine. Residues 280 to 284 (RASVH) and 309 to 314 (RGTRGE) each bind ATP.

The protein belongs to the ATP:guanido phosphotransferase family.

It catalyses the reaction L-arginine + ATP = N(omega)-phospho-L-arginine + ADP + H(+). In terms of biological role, catalyzes the reversible transfer of high energy ATP gamma-phosphate group to L-arginine. This chain is Arginine kinase, found in Polybetes pythagoricus (South American huntsman spider).